A 402-amino-acid polypeptide reads, in one-letter code: Type II NADH:quinone oxidoreductase (402 aa).

FAD is bound by residues 12–16, 39–40, and V83; these read GAGYA and NK. E172 is an active-site residue. FAD is bound by residues D302, 319–320, and K379; that span reads AQ.

Belongs to the NADH dehydrogenase family. FAD serves as cofactor.

The protein localises to the cell membrane. The enzyme catalyses a quinone + NADH + H(+) = a quinol + NAD(+). In terms of biological role, alternative, nonproton pumping NADH:quinone oxidoreductase that delivers electrons to the respiratory chain by oxidation of NADH and reduction of quinones, and contributes to the regeneration of NAD(+). The chain is Type II NADH:quinone oxidoreductase from Staphylococcus aureus (strain bovine RF122 / ET3-1).